The primary structure comprises 341 residues: UDP-N-acetylenolpyruvoylglucosamine reductase (341 aa).

Residues 15–185 (LAQSCADLVE…TAVGLRLVKR (171 aa)) form the FAD-binding PCMH-type domain. Residue R161 is part of the active site. S231 functions as the Proton donor in the catalytic mechanism. E327 is an active-site residue.

It belongs to the MurB family. FAD is required as a cofactor.

Its subcellular location is the cytoplasm. It carries out the reaction UDP-N-acetyl-alpha-D-muramate + NADP(+) = UDP-N-acetyl-3-O-(1-carboxyvinyl)-alpha-D-glucosamine + NADPH + H(+). Its pathway is cell wall biogenesis; peptidoglycan biosynthesis. Cell wall formation. This Shewanella baltica (strain OS195) protein is UDP-N-acetylenolpyruvoylglucosamine reductase.